The sequence spans 563 residues: MTSSIVLKFFLIATLLVIANSLPACHNGQFLKINKGPNCDDAKYENPDYVIVGGGAAGSVLLDKCISYGYKCTLIERGIDYEDEQVVSQPSGSGLVQSSNAVLLTTTYPNSNIFNKTLVITEPNIIGGSTSINGEISVFTDIENFFEEISIPGWSYLDVLPYYLNVTNSVNRPSHQGAVDVTNTLVTDPKYVAFKAAIQQVFPNIHEKLPDMNTASLNGGFPGYGPPETSVKTSFIPIGDTQVPVSGFRESAYRAYIHPIRNHPNVRIMLRSRVDKVAFDKCGETAKKVFVTYQNYQGSDSQCELKAKKGIILSAGALRTPQILMQSGVGPADHLNELGIPVVSDMPDVGQHLDDHPTVVRTFLGIIPDSSISANIDGHAYWNHLDDPNKVPNWSIQISGFYGPNFKNILNVYMDQMSRGWIKLRSTDPADTPIFNLGHFSDLEDVGPASLGFNKTNQVISNLQYIPIPGLTDVVCPSFIPNCQSNLTEYYMAAYYQFGYSGYHYTGTCAFEKVVDPNTGLVYGFDNLYVVDASVFPKAPRGNTQIGTYAISAKLADIIFGCQ.

The first 21 residues, 1–21 (MTSSIVLKFFLIATLLVIANS), serve as a signal peptide directing secretion. 48-77 (DYVIVGGGAAGSVLLDKCISYGYKCTLIER) provides a ligand contact to FAD. The active-site Proton acceptor is the H504.

This sequence belongs to the GMC oxidoreductase family. It depends on FAD as a cofactor.

This chain is Putative GMC-type oxidoreductase L128, found in Acanthamoeba polyphaga mimivirus (APMV).